A 264-amino-acid chain; its full sequence is Thymidylate synthase (264 aa).

Residue R21 coordinates dUMP. H51 provides a ligand contact to (6R)-5,10-methylene-5,6,7,8-tetrahydrofolate. 126–127 serves as a coordination point for dUMP; sequence RR. Residue C146 is the Nucleophile of the active site. DUMP-binding positions include 166–169, N177, and 207–209; these read RSAD and HLY. D169 is a binding site for (6R)-5,10-methylene-5,6,7,8-tetrahydrofolate. Residue A263 participates in (6R)-5,10-methylene-5,6,7,8-tetrahydrofolate binding.

The protein belongs to the thymidylate synthase family. Bacterial-type ThyA subfamily. In terms of assembly, homodimer.

It localises to the cytoplasm. It carries out the reaction dUMP + (6R)-5,10-methylene-5,6,7,8-tetrahydrofolate = 7,8-dihydrofolate + dTMP. The protein operates within pyrimidine metabolism; dTTP biosynthesis. Functionally, catalyzes the reductive methylation of 2'-deoxyuridine-5'-monophosphate (dUMP) to 2'-deoxythymidine-5'-monophosphate (dTMP) while utilizing 5,10-methylenetetrahydrofolate (mTHF) as the methyl donor and reductant in the reaction, yielding dihydrofolate (DHF) as a by-product. This enzymatic reaction provides an intracellular de novo source of dTMP, an essential precursor for DNA biosynthesis. The sequence is that of Thymidylate synthase from Hahella chejuensis (strain KCTC 2396).